A 294-amino-acid polypeptide reads, in one-letter code: Release factor glutamine methyltransferase (294 aa).

Positions 148 and 201 each coordinate S-adenosyl-L-methionine. 201–204 is a binding site for substrate; the sequence is NPPY.

Belongs to the protein N5-glutamine methyltransferase family. PrmC subfamily.

It carries out the reaction L-glutaminyl-[peptide chain release factor] + S-adenosyl-L-methionine = N(5)-methyl-L-glutaminyl-[peptide chain release factor] + S-adenosyl-L-homocysteine + H(+). In terms of biological role, methylates the class 1 translation termination release factors RF1/PrfA and RF2/PrfB on the glutamine residue of the universally conserved GGQ motif. The polypeptide is Release factor glutamine methyltransferase (Bifidobacterium longum (strain NCC 2705)).